Here is an 802-residue protein sequence, read N- to C-terminus: Neuronal PAS domain-containing protein 4 (802 aa).

The interval 1-13 (MYRSTKGASKARR) is basic motif; degenerate. Positions 1-53 (MYRSTKGASKARRDQINAEIRNLKELLPLAEADKVRLSYLHIMSLACIYTRKG) constitute a bHLH domain. Residues 5–38 (TKGASKARRDQINAEIRNLKELLPLAEADKVRLS) adopt a coiled-coil conformation. The helix-loop-helix motif stretch occupies residues 14-53 (DQINAEIRNLKELLPLAEADKVRLSYLHIMSLACIYTRKG). PAS domains lie at 70–144 (SAQE…LDAD) and 203–275 (PGPG…LAEN). Residues 280 to 319 (AEMVVRLQAKHGGWTWIYCMLYSDGPEGPITANNYPISDT) form the PAC domain. Composition is skewed to polar residues over residues 472 to 495 (PSSA…SSAR), 502 to 518 (TPCT…STAT), and 527 to 555 (THEQ…QLSP). The tract at residues 472-555 (PSSATFPDPL…SQTFPEQLSP (84 aa)) is disordered. Residues 624-648 (YTEKEQNEIDRLIQQISQLAQGMDR) adopt a coiled-coil conformation.

As to quaternary structure, efficient DNA binding requires dimerization with another bHLH protein. Heterodimer; forms a heterodimer with ARNT, ARNT2 or BMAL1. Ubiquitinated, leading to degradation by the proteosome. As to expression, specifically expressed in neurons. Expressed in the lateral nucleus of the amygdala (at protein level).

It is found in the nucleus. Functionally, transcription factor expressed in neurons of the brain that regulates the excitatory-inhibitory balance within neural circuits and is required for contextual memory in the hippocampus. Plays a key role in the structural and functional plasticity of neurons. Acts as an early-response transcription factor in both excitatory and inhibitory neurons, where it induces distinct but overlapping sets of late-response genes in these two types of neurons, allowing the synapses that form on inhibitory and excitatory neurons to be modified by neuronal activity in a manner specific to their function within a circuit, thereby facilitating appropriate circuit responses to sensory experience. In excitatory neurons, activates transcription of BDNF, which in turn controls the number of GABA-releasing synapses that form on excitatory neurons, thereby promoting an increased number of inhibitory synapses on excitatory neurons. In inhibitory neurons, regulates a distinct set of target genes that serve to increase excitatory input onto somatostatin neurons, probably resulting in enhanced feedback inhibition within cortical circuits. The excitatory and inhibitory balance in neurons affects a number of processes, such as short-term and long-term memory, acquisition of experience, fear memory, response to stress and social behavior. Acts as a regulator of dendritic spine development in olfactory bulb granule cells in a sensory-experience-dependent manner by regulating expression of MDM2. Efficient DNA binding requires dimerization with another bHLH protein, such as ARNT, ARNT2 or BMAL1. Can activate the CME (CNS midline enhancer) element. This Rattus norvegicus (Rat) protein is Neuronal PAS domain-containing protein 4.